Here is a 136-residue protein sequence, read N- to C-terminus: Inner membrane protein YbhQ (136 aa).

Residues 1–12 (MKWQQRVRVATG) lie on the Cytoplasmic side of the membrane. A helical membrane pass occupies residues 13-33 (LSCWQIMLHLLVVALLVVGWM). The Periplasmic segment spans residues 34-37 (SKTL). A helical transmembrane segment spans residues 38 to 58 (VHVGVGLCALYCVTVVMMLVF). At 59–71 (QRHPEQRWREVAD) the chain is on the cytoplasmic side. Residues 72–92 (VLEELTTTWYFGAALIVLWLL) form a helical membrane-spanning segment. The Periplasmic segment spans residues 93–99 (SRVLENN). A helical transmembrane segment spans residues 100–120 (FLLAIAGLAILAGPAVVSLLA). The Cytoplasmic portion of the chain corresponds to 121–136 (KDKKLHHLTSKHRVRR).

Its subcellular location is the cell inner membrane. This Escherichia coli O157:H7 protein is Inner membrane protein YbhQ (ybhQ).